The primary structure comprises 854 residues: MAKIRIHEIAKELGYDSKEIIEKANELGLGIKTASNAVEPDIAVAIYEYIQTREIPEAFKKNIKTPTAKKPKKENAKDQEKLNESEKKEPKKEESKEQEKQEIIDTHKPQSLASATLAKRRGLVIVKKKKDEEEIQVKKEEIKNSNDISINNEERLSLKTMFSNADESLKKKKKEKKSFVASKKESTEKMNFLDEHDFGDISLDDEDEVVLPDFSVKEQEKPQNINKKQPNFIRQAVGNSAGFGLEGGIQRRSRKKPPKKIEKKEVEEVSSVSISKEIRVYEFADKIGKSTSEVISKLFMLGMMTTKNDFLDEDAIEILAAEFGIEINIINEADEFDYVKDYEEETDEKDLVTRAPVITIMGHVDHGKTSLLDYIRKSRVASGEAGGITQHVGAYMVEKNGRKITFIDTPGHEAFTAMRARGASITDIVIIVVAADDGVKPQTKEAINHAKAAGVPIIIAINKMDKEAANPDMVKTQLAEMEIMPVEWGGSYEFVGVSAKTGMGIEDLLEIVLLQADILELKANPKSFAKASIIESSVQKGRGAVATIIVQNGTLAVGSTVVAGEAYGKVRAMSDDQGKALKEIKPGECGVIVGLSEVADAGEILIAVKTDKEAREYANKRHEYNRQKELSKSTKVSIDELGAKIKEGNLKALPVILKADVQGSLEALKASLEKLRNDEIKVNIIYSGVGGITQSDIELASASENSIVLGFNIRPTGEVKERAKDKGVEIKTYNVIYNLLDDVKALLGGMMSPIISEEQLGQAEIRQVINVPKIGQIAGCMVTEGVINRGAKIRLIRDGVVVYEGNVSSLKRFKDDAKEVAKGYECGVGIEGCDDMRVGDYIESYKEVEEQASL.

The span at 61 to 72 (KNIKTPTAKKPK) shows a compositional bias: basic residues. 2 disordered regions span residues 61 to 115 (KNIK…LASA) and 167 to 186 (ESLKKKKKEKKSFVASKKES). Residues 73-108 (KENAKDQEKLNESEKKEPKKEESKEQEKQEIIDTHK) show a composition bias toward basic and acidic residues. In terms of domain architecture, tr-type G spans 353–520 (TRAPVITIMG…IVLLQADILE (168 aa)). Residues 362-369 (GHVDHGKT) are G1. 362–369 (GHVDHGKT) provides a ligand contact to GTP. The G2 stretch occupies residues 387 to 391 (GITQH). Residues 408–411 (DTPG) form a G3 region. GTP is bound by residues 408 to 412 (DTPGH) and 462 to 465 (NKMD). The interval 462–465 (NKMD) is G4. Residues 498–500 (SAK) are G5.

It belongs to the TRAFAC class translation factor GTPase superfamily. Classic translation factor GTPase family. IF-2 subfamily.

It localises to the cytoplasm. In terms of biological role, one of the essential components for the initiation of protein synthesis. Protects formylmethionyl-tRNA from spontaneous hydrolysis and promotes its binding to the 30S ribosomal subunits. Also involved in the hydrolysis of GTP during the formation of the 70S ribosomal complex. This Campylobacter jejuni subsp. doylei (strain ATCC BAA-1458 / RM4099 / 269.97) protein is Translation initiation factor IF-2.